The sequence spans 1301 residues: Zinc finger protein 532 (1301 aa).

Disordered regions lie at residues 26 to 206, 223 to 266, and 281 to 366; these read PKAA…RETE, AEDK…SSSK, and KAAS…IKTI. A compositionally biased stretch (basic and acidic residues) spans 32 to 52; that stretch reads SGHDDHESHMKQNAHGEDDSH. Polar residues predominate over residues 84–101; the sequence is PTGNGLHNGFLTASSLDS. Residues 102–111 are compositionally biased toward basic and acidic residues; the sequence is YSKDGAKSLK. Positions 122–133 are enriched in polar residues; the sequence is KDSTFSQFSPIS. Phosphoserine occurs at positions 130, 133, and 134. Residues 136–151 show a composition bias toward acidic residues; the sequence is EEFDDDEKIEVDDPPD. The span at 158 to 170 shows a compositional bias: polar residues; that stretch reads SFRSNVLTGSAPQ. N6-acetyllysine is present on lysine 175. The segment covering 182–195 has biased composition (polar residues); it reads ENSSKTGLSTSGNV. Composition is skewed to basic and acidic residues over residues 196–206 and 223–250; these read EKNKAVKRETE and AEDK…EKND. Threonine 205 bears the Phosphothreonine mark. Phosphoserine occurs at positions 252, 307, and 314. A compositionally biased stretch (basic and acidic residues) spans 303-315; it reads EVNDSPRAADKSP. Low complexity predominate over residues 337–359; that stretch reads SISSENSSKGSPSSPAGSTPAIP. Serine 434 is subject to Phosphoserine. Residues lysine 459 and lysine 516 each participate in a glycyl lysine isopeptide (Lys-Gly) (interchain with G-Cter in SUMO2) cross-link. The segment at 616–635 adopts a C2H2-type 1; degenerate zinc-finger fold; that stretch reads YKCLECGDSFALEKSLTQHY. A C2H2-type 2; degenerate zinc finger spans residues 754–779; the sequence is LKCLECNEVFQDETSLATHFQQAADT. 5 consecutive C2H2-type zinc fingers follow at residues 783-805, 842-865, 870-893, 905-927, and 936-959; these read KTCT…QRIH, FRCV…QGSH, YKCP…YTQH, YKCS…FDQH, and FKCP…KSMH. Lysine 980 is covalently cross-linked (Glycyl lysine isopeptide (Lys-Gly) (interchain with G-Cter in SUMO2)). The tract at residues 983–1017 is disordered; sequence TQNSANQNKEDTKSMNGKEKLEKKSPSPVKKSMET. Residues 990–1017 show a composition bias toward basic and acidic residues; that stretch reads NKEDTKSMNGKEKLEKKSPSPVKKSMET. 2 consecutive C2H2-type zinc fingers follow at residues 1025-1048 and 1055-1078; these read WTCW…RKEH and HPCR…RIKH. The C2H2-type 10; degenerate zinc-finger motif lies at 1085–1111; sequence YACSHCPDSRRTFTKRLMLEKHVQLMH. The residue at position 1140 (serine 1140) is a Phosphoserine. Glycyl lysine isopeptide (Lys-Gly) (interchain with G-Cter in SUMO2) cross-links involve residues lysine 1144 and lysine 1167. A C2H2-type 11 zinc finger spans residues 1203-1226; the sequence is YQCRECGLCYTSHVSLSRHLFIVH. The interval 1230-1263 is disordered; it reads EPQPVSKQNGAGEDNQQENKPSHEDESPDGAVSD. The C2H2-type 12 zinc finger occupies 1264–1286; sequence RKCKVCAKTFETEAALNTHMRTH.

This sequence belongs to the krueppel C2H2-type zinc-finger protein family.

It is found in the nucleus. Its function is as follows. May be involved in transcriptional regulation. In Homo sapiens (Human), this protein is Zinc finger protein 532 (ZNF532).